Reading from the N-terminus, the 814-residue chain is Plakophilin-2 (814 aa).

The required for binding to single-stranded DNA stretch occupies residues 1–329; that stretch reads MAIPGSLGEC…MTLERAVNML (329 aa). Phosphoserine is present on Ser-44. Position 46 is an omega-N-methylarginine (Arg-46). Phosphoserine is present on residues Ser-82 and Ser-130. 8 ARM repeats span residues 200-240, 309-352, 354-393, 503-549, 604-644, 652-691, 696-737, and 740-782; these read TCQH…SIKG, CDCL…ESFQ, SEAR…NLVF, PDGR…NLSY, PRGI…NLTA, SVAR…NLSR, QNEI…NLMQ, and YQNA…SLWA.

This sequence belongs to the beta-catenin family. In terms of assembly, interacts with DSC2. Interacts with JUP. Interacts with KRT5/CK5, KRT8/CK8, KRT14/CK14, KRT18/CK18 and VIM. Interacts (via N-terminus) with MARK3/C-TAK1. Interacts with DSP. Interacts with DSG1, DSG2 and DSG3. Interacts (via N-terminus) with CTNNB1. Interacts with CDH1. Interacts with the RNA polymerase III (Pol III) complex proteins POLR3A/RPC155, POLR3F/RPC39 and POLR3C/RPC82. Interacts with CTNNA3. Interacts (via N-terminus) with SCN5A/Nav1.5. Interacts with ANK3/ANKG and GJA1/CX43. Expressed in the heart (at protein level).

It localises to the nucleus. The protein localises to the cell junction. It is found in the desmosome. Its subcellular location is the cytoplasm. Functionally, a component of desmosome cell-cell junctions which are required for positive regulation of cellular adhesion. Regulates focal adhesion turnover resulting in changes in focal adhesion size, cell adhesion and cell spreading, potentially via transcriptional modulation of beta-integrins. Required to maintain gingival epithelial barrier function. Important component of the desmosome that is also required for localization of desmosome component proteins such as DSC2, DSG2 and JUP to the desmosome cell-cell junction. Required for the formation of desmosome cell junctions in cardiomyocytes, thereby required for the correct formation of the heart, specifically trabeculation and formation of the atria walls. Loss of desmosome cell junctions leads to mis-localization of DSP and DSG2 resulting in disruption of cell-cell adhesion and disordered intermediate filaments. Modulates profibrotic gene expression in cardiomyocytes via regulation of DSP expression and subsequent activation of downstream TGFB1 and MAPK14/p38 MAPK signaling. Required for cardiac sodium current propagation and electrical synchrony in cardiac myocytes, via ANK3 stabilization and modulation of SCN5A/Nav1.5 localization to cell-cell junctions. Required for mitochondrial function, nuclear envelope integrity and positive regulation of SIRT3 transcription via maintaining DES localization at its nuclear envelope and cell tip anchoring points, and thereby preserving regulation of the transcriptional program. Maintenance of nuclear envelope integrity protects against DNA damage and transcriptional dysregulation of genes, especially those involved in the electron transport chain, thereby preserving mitochondrial function and protecting against superoxide radical anion generation. Binds single-stranded DNA (ssDNA). May regulate the localization of GJA1 to gap junctions in intercalated disks of the heart. This Rattus norvegicus (Rat) protein is Plakophilin-2.